The chain runs to 347 residues: Phosphate acyltransferase (347 aa).

The protein belongs to the PlsX family. As to quaternary structure, homodimer. Probably interacts with PlsY.

The protein localises to the cytoplasm. The enzyme catalyses a fatty acyl-[ACP] + phosphate = an acyl phosphate + holo-[ACP]. The protein operates within lipid metabolism; phospholipid metabolism. Its function is as follows. Catalyzes the reversible formation of acyl-phosphate (acyl-PO(4)) from acyl-[acyl-carrier-protein] (acyl-ACP). This enzyme utilizes acyl-ACP as fatty acyl donor, but not acyl-CoA. The protein is Phosphate acyltransferase of Methylobacillus flagellatus (strain ATCC 51484 / DSM 6875 / VKM B-1610 / KT).